The following is a 333-amino-acid chain: Lipoyl synthase (333 aa).

The segment covering 1-15 (MSTLVESPVPSNDSQ) has biased composition (polar residues). Residues 1 to 34 (MSTLVESPVPSNDSQAAAPAAYDPTQKQKSQAKT) are disordered. 7 residues coordinate [4Fe-4S] cluster: C80, C85, C91, C106, C110, C113, and S320. Residues 91–309 (CFGKGTATFM…EREAYAMGFT (219 aa)) form the Radical SAM core domain.

It belongs to the radical SAM superfamily. Lipoyl synthase family. [4Fe-4S] cluster serves as cofactor.

The protein resides in the cytoplasm. It catalyses the reaction [[Fe-S] cluster scaffold protein carrying a second [4Fe-4S](2+) cluster] + N(6)-octanoyl-L-lysyl-[protein] + 2 oxidized [2Fe-2S]-[ferredoxin] + 2 S-adenosyl-L-methionine + 4 H(+) = [[Fe-S] cluster scaffold protein] + N(6)-[(R)-dihydrolipoyl]-L-lysyl-[protein] + 4 Fe(3+) + 2 hydrogen sulfide + 2 5'-deoxyadenosine + 2 L-methionine + 2 reduced [2Fe-2S]-[ferredoxin]. The protein operates within protein modification; protein lipoylation via endogenous pathway; protein N(6)-(lipoyl)lysine from octanoyl-[acyl-carrier-protein]: step 2/2. In terms of biological role, catalyzes the radical-mediated insertion of two sulfur atoms into the C-6 and C-8 positions of the octanoyl moiety bound to the lipoyl domains of lipoate-dependent enzymes, thereby converting the octanoylated domains into lipoylated derivatives. The sequence is that of Lipoyl synthase from Bordetella bronchiseptica (strain ATCC BAA-588 / NCTC 13252 / RB50) (Alcaligenes bronchisepticus).